The chain runs to 502 residues: Arginine-specific demethylase JMJ22 (502 aa).

The segment at 15-45 (KSKSKRLKLHQHEPESLFPEKEVEEEDEDEG) is disordered. Residues 24–35 (HQHEPESLFPEK) show a composition bias toward basic and acidic residues. An F-box domain is found at 80–126 (LGNLQILSDELVLDILGLLGANHLGVLATVTKSFYIFANHEPLWRNL). Residues 279–439 (EKVPVLDSEY…NVLEFLKKPN (161 aa)) enclose the JmjC domain. H324, D326, and H407 together coordinate Fe cation.

The protein belongs to the JARID1 histone demethylase family. It depends on Fe(2+) as a cofactor. In terms of tissue distribution, expressed in inflorescences, roots and siliques, and, at low levels, in leaves and stems.

It is found in the nucleus. The catalysed reaction is N(omega),N(omega)-dimethyl-L-arginyl-[protein] + 2-oxoglutarate + O2 = N(omega)-methyl-L-arginyl-[protein] + formaldehyde + succinate + CO2. Its function is as follows. Histone demethylase that demethylates 'Arg-3' (H4R3me) of histone H4 with a specific activity for H4R3me2. Involved in the positive regulation of gene expression. Together with JMJ20, positively regulates seed germination by promoting the removal of repressive histone arginine methylations (e.g. H4R3me2) at GA3ox1 and GA3ox2 to trigger gibberellic acid (GA) biosynthesis. In Arabidopsis thaliana (Mouse-ear cress), this protein is Arginine-specific demethylase JMJ22.